A 780-amino-acid polypeptide reads, in one-letter code: Aconitate hydratase, mitochondrial (780 aa).

The N-terminal 27 residues, 1-27 (MAPYSLLVTRLQKALGVRQYHVASVLC), are a transit peptide targeting the mitochondrion. Position 31 is an N6-succinyllysine (Lys-31). Lys-50 carries the N6-acetyllysine; alternate modification. An N6-succinyllysine; alternate modification is found at Lys-50. Gln-99 is a substrate binding site. N6-acetyllysine; alternate occurs at positions 138 and 144. An N6-succinyllysine; alternate mark is found at Lys-138 and Lys-144. 192–194 (DSH) provides a ligand contact to substrate. Lys-233 carries the post-translational modification N6-acetyllysine; alternate. Residue Lys-233 is modified to N6-succinyllysine; alternate. A [4Fe-4S] cluster-binding site is contributed by Cys-385. Lys-411 carries the post-translational modification N6-succinyllysine. Residues Cys-448 and Cys-451 each contribute to the [4Fe-4S] cluster site. Substrate is bound by residues Arg-474 and Arg-479. Positions 528 to 537 (DADELPKGEF) are enriched in basic and acidic residues. The tract at residues 528–560 (DADELPKGEFDPGQDTYQHPPKDSSGQHVDVSP) is disordered. An N6-succinyllysine modification is found at Lys-549. A compositionally biased stretch (polar residues) spans 551–560 (SSGQHVDVSP). Ser-559 carries the post-translational modification Phosphoserine. Lys-573 bears the N6-acetyllysine; alternate mark. N6-succinyllysine; alternate is present on Lys-573. N6-succinyllysine occurs at positions 577 and 591. N6-acetyllysine; alternate is present on Lys-605. Residue Lys-605 is modified to N6-succinyllysine; alternate. Residue Arg-607 coordinates substrate. An N6-succinyllysine modification is found at Lys-628. Phosphoserine is present on Ser-670. 670-671 (SR) lines the substrate pocket. An N6-succinyllysine modification is found at Lys-689. 2 positions are modified to N6-acetyllysine; alternate: Lys-723 and Lys-730. N6-succinyllysine; alternate is present on residues Lys-723 and Lys-730. N6-acetyllysine is present on residues Lys-736, Lys-739, and Lys-743.

Belongs to the aconitase/IPM isomerase family. As to quaternary structure, monomer. Requires [4Fe-4S] cluster as cofactor. Post-translationally, forms covalent cross-links mediated by transglutaminase TGM2, between a glutamine and the epsilon-amino group of a lysine residue, forming homopolymers and heteropolymers.

Its subcellular location is the mitochondrion. It catalyses the reaction citrate = D-threo-isocitrate. Its pathway is carbohydrate metabolism; tricarboxylic acid cycle; isocitrate from oxaloacetate: step 2/2. Catalyzes the isomerization of citrate to isocitrate via cis-aconitate. This chain is Aconitate hydratase, mitochondrial (ACO2), found in Homo sapiens (Human).